The sequence spans 227 residues: ATP synthase F(0) complex subunit a (227 aa).

A run of 6 helical transmembrane segments spans residues 14 to 34 (LLGI…FPTP), 69 to 89 (WATI…LGLL), 99 to 119 (LSLN…IGML), 137 to 157 (LLIP…PLAL), 180 to 200 (FVLI…LFLL), and 202 to 222 (ILEV…LSLY).

Belongs to the ATPase A chain family. Component of the ATP synthase complex composed at least of ATP5F1A/subunit alpha, ATP5F1B/subunit beta, ATP5MC1/subunit c (homooctomer), MT-ATP6/subunit a, MT-ATP8/subunit 8, ATP5ME/subunit e, ATP5MF/subunit f, ATP5MG/subunit g, ATP5MK/subunit k, ATP5MJ/subunit j, ATP5F1C/subunit gamma, ATP5F1D/subunit delta, ATP5F1E/subunit epsilon, ATP5PF/subunit F6, ATP5PB/subunit b, ATP5PD/subunit d, ATP5PO/subunit OSCP. ATP synthase complex consists of a soluble F(1) head domain (subunits alpha(3) and beta(3)) - the catalytic core - and a membrane F(0) domain - the membrane proton channel (subunits c, a, 8, e, f, g, k and j). These two domains are linked by a central stalk (subunits gamma, delta, and epsilon) rotating inside the F1 region and a stationary peripheral stalk (subunits F6, b, d, and OSCP). Interacts with DNAJC30; interaction is direct.

Its subcellular location is the mitochondrion inner membrane. The enzyme catalyses H(+)(in) = H(+)(out). Subunit a, of the mitochondrial membrane ATP synthase complex (F(1)F(0) ATP synthase or Complex V) that produces ATP from ADP in the presence of a proton gradient across the membrane which is generated by electron transport complexes of the respiratory chain. ATP synthase complex consist of a soluble F(1) head domain - the catalytic core - and a membrane F(1) domain - the membrane proton channel. These two domains are linked by a central stalk rotating inside the F(1) region and a stationary peripheral stalk. During catalysis, ATP synthesis in the catalytic domain of F(1) is coupled via a rotary mechanism of the central stalk subunits to proton translocation. With the subunit c (ATP5MC1), forms the proton-conducting channel in the F(0) domain, that contains two crucial half-channels (inlet and outlet) that facilitate proton movement from the mitochondrial intermembrane space (IMS) into the matrix. Protons are taken up via the inlet half-channel and released through the outlet half-channel, following a Grotthuss mechanism. This Squalus acanthias (Spiny dogfish) protein is ATP synthase F(0) complex subunit a.